Reading from the N-terminus, the 362-residue chain is DNA replication and repair protein RecF (362 aa).

An ATP-binding site is contributed by 30–37 (GLNAQGKS).

It belongs to the RecF family.

It localises to the cytoplasm. The RecF protein is involved in DNA metabolism; it is required for DNA replication and normal SOS inducibility. RecF binds preferentially to single-stranded, linear DNA. It also seems to bind ATP. The chain is DNA replication and repair protein RecF from Thermoanaerobacter pseudethanolicus (strain ATCC 33223 / 39E) (Clostridium thermohydrosulfuricum).